Consider the following 478-residue polypeptide: Odorant receptor coreceptor (478 aa).

Residues 1-43 lie on the Cytoplasmic side of the membrane; that stretch reads MMKMKQQGLVADLLPNIRVMKTFGHFVFNYYNDNSSKYLHKVY. The chain crosses the membrane as a helical span at residues 44–64; the sequence is CCVNLFMLLLQFGLCAVNLIV. Residues 65 to 73 are Extracellular-facing; it reads ESADVDDLT. Residues 74–94 traverse the membrane as a helical segment; the sequence is ANTITLLFFTHSIVKICYFAI. Over 95–133 the chain is Cytoplasmic; it reads RSKYFYRTWAIWNNPNSHPLFAESNARYHAIALKKMRLL. The chain crosses the membrane as a helical span at residues 134-154; the sequence is LFLVGGTTMLAAVAWTVLTFF. The Extracellular portion of the chain corresponds to 155–190; sequence EHPIRKIVDPVTNETEIIELPQLLIRSFYPFDAGKG. An N-linked (GlcNAc...) asparagine glycan is attached at Asn-167. Residues 191–211 form a helical membrane-spanning segment; sequence ITHVLVLVYQFYWVLFMLIDA. At 212-349 the chain is on the cytoplasmic side; it reads NSLDVLFCSW…IVRLVTAVGD (138 aa). Residues 261–281 are disordered; that stretch reads SADHLRDGDNPPPPPPPQSDN. The chain crosses the membrane as a helical span at residues 350 to 370; it reads AYGFALLLHMLTTTITLTLLA. At 371–382 the chain is on the extracellular side; that stretch reads YQATKVNGINVY. A helical membrane pass occupies residues 383-403; the sequence is AASTIGYILYTFGQVFLFCIF. The Cytoplasmic segment spans residues 404–454; sequence GNRLIEESTSVMEAAYSCHWYDGSEEAKTFVQIVCQQCQKAMSISGAKFFT. Residues 455–475 form a helical membrane-spanning segment; that stretch reads VSLDLFASVLGAVVTYFMVLV. Residues 476 to 478 are Extracellular-facing; the sequence is QLK.

It belongs to the insect chemoreceptor superfamily. Heteromeric odorant receptor channel (TC 1.A.69) family. Orco subfamily. As to quaternary structure, heterodimer with conventional odorant receptors (ORs). As to expression, present in antennae (at protein level).

It localises to the cell membrane. Functionally, odorant coreceptor which complexes with conventional odorant receptors (ORs) to form odorant-sensing units, providing sensitive and prolonged odorant signaling and calcium permeability. Obligate coreceptor of all odorant receptors. Orco is a universal and integral part of the functional odorant receptor, involved in the dendritic localization of other olfactory receptors. Can form functional ion channels in the absence of an odor-binding odorant receptor. Plays a central role in the perception of olfactory stimuli in ants and is essential for ant social organization. Required for pheromone sensing. Also required for the development and maintenance of odorant receptor neurons (ORNs) and of antennal lobe glomeruli. The polypeptide is Odorant receptor coreceptor (Ooceraea biroi (Clonal raider ant)).